Reading from the N-terminus, the 51-residue chain is Ovomucoid (51 aa).

A Kazal-like domain is found at 3–51; that stretch reads VDCSGYPKPDCTLESFPLCGSDNQTYSNKCAFCNAAVERNVTLRHLGEC. 3 disulfides stabilise this stretch: Cys-5/Cys-35, Cys-13/Cys-32, and Cys-21/Cys-51. An N-linked (GlcNAc...) asparagine glycan is attached at Asn-42.

It is found in the secreted. The sequence is that of Ovomucoid from Rhynchotus rufescens (Red-winged tinamou).